The primary structure comprises 611 residues: Elongation factor 4 1 (611 aa).

Positions 11–193 (QHIRNFSIVA…QIVHKIPAPQ (183 aa)) constitute a tr-type G domain. GTP is bound by residues 23 to 28 (DHGKST) and 140 to 143 (NKID).

It belongs to the TRAFAC class translation factor GTPase superfamily. Classic translation factor GTPase family. LepA subfamily.

The protein localises to the cell membrane. The enzyme catalyses GTP + H2O = GDP + phosphate + H(+). Its function is as follows. Required for accurate and efficient protein synthesis under certain stress conditions. May act as a fidelity factor of the translation reaction, by catalyzing a one-codon backward translocation of tRNAs on improperly translocated ribosomes. Back-translocation proceeds from a post-translocation (POST) complex to a pre-translocation (PRE) complex, thus giving elongation factor G a second chance to translocate the tRNAs correctly. Binds to ribosomes in a GTP-dependent manner. This chain is Elongation factor 4 1, found in Lactiplantibacillus plantarum (strain ATCC BAA-793 / NCIMB 8826 / WCFS1) (Lactobacillus plantarum).